The sequence spans 274 residues: Rhamnulose-1-phosphate aldolase (274 aa).

Glutamate 117 is an active-site residue. Positions 141, 143, and 212 each coordinate Zn(2+).

Belongs to the aldolase class II family. RhaD subfamily. Homotetramer. Zn(2+) serves as cofactor.

Its subcellular location is the cytoplasm. It catalyses the reaction L-rhamnulose 1-phosphate = (S)-lactaldehyde + dihydroxyacetone phosphate. Its pathway is carbohydrate degradation; L-rhamnose degradation; glycerone phosphate from L-rhamnose: step 3/3. Functionally, catalyzes the reversible cleavage of L-rhamnulose-1-phosphate to dihydroxyacetone phosphate (DHAP) and L-lactaldehyde. This is Rhamnulose-1-phosphate aldolase from Escherichia coli O81 (strain ED1a).